Reading from the N-terminus, the 666-residue chain is MRGCLQLGRWLSAAPRCQAASLRPPTVFPSYRYNRSFSTTTIYYGRSKTTPTKLDLDLEKRIAAIPIERFRNFCIVAHVDHGKSTLSDRLLELTGTIEAGTNKQVLDKLDVERERGITVKAQTCTMIYNYKGEDYLLHLVDTPGHVDFRAEVSRSYASCGGAILLVDASQGVQAQTVANFYLAFAQGLELIPILNKVDLPSSDPERALEQIKNTFEIDTDKAVMVSAKTGLNVPAVLPTVVEKVPAPIGDSTKPLRMLLVDSWYDSYKGVILLVRVFDGEVRAGQQLISFVTGLKYFVGEVGIMYPTETAQTVLRAGQVGYIYFNPGMKRSKEAKIGDTFTRVGYEKVVEPLPGFEEPKSMVFVAVYPVNADLFEHLEDSINQLVLNDRSITVQKESSEALGAGFRMGFLGTLHCSVFEDRLRQEHGASIIITPPSVPVKVVWKSGAEEIITNPAKFPDDDSVRLKVAEVQEPFVLVTLTFPEEYLGKVIELCEANRGEQQSIEYFTATQVIMKYELPLAHLVDDFFGKLKGGTKGYASLDYEESAWRAGNIVRLQLLVNREPVDAVTRIMHSSQVSRQGRIWVTKFKEHVDRQLFEIIIQAAVGKKIIARETIKPYRKDVLAKLHASDVSRRRKLLEKQKEGRKRLRAVGNVVIEHKAFQAFLAK.

The transit peptide at 1–44 (MRGCLQLGRWLSAAPRCQAASLRPPTVFPSYRYNRSFSTTTIYY) directs the protein to the mitochondrion. In terms of domain architecture, tr-type G spans 68–248 (ERFRNFCIVA…TVVEKVPAPI (181 aa)). GTP-binding positions include 77 to 84 (AHVDHGKS), 141 to 145 (DTPGH), and 195 to 198 (NKVD).

It belongs to the TRAFAC class translation factor GTPase superfamily. Classic translation factor GTPase family. LepA subfamily.

Its subcellular location is the mitochondrion inner membrane. The enzyme catalyses GTP + H2O = GDP + phosphate + H(+). Promotes mitochondrial protein synthesis. May act as a fidelity factor of the translation reaction, by catalyzing a one-codon backward translocation of tRNAs on improperly translocated ribosomes. Binds to mitochondrial ribosomes in a GTP-dependent manner. The chain is Translation factor guf1, mitochondrial (guf1) from Penicillium rubens (strain ATCC 28089 / DSM 1075 / NRRL 1951 / Wisconsin 54-1255) (Penicillium chrysogenum).